Here is a 54-residue protein sequence, read N- to C-terminus: MPQLNPIPWVFLFFLVWLVLGFLGLQKFTSIVTTTLDDSSEEVEVKSKEYSWPW.

Residues 9–25 traverse the membrane as a helical segment; the sequence is WVFLFFLVWLVLGFLGL.

It belongs to the ATPase protein 8 family. F-type ATPases have 2 components, CF(1) - the catalytic core - and CF(0) - the membrane proton channel.

It localises to the mitochondrion membrane. In terms of biological role, mitochondrial membrane ATP synthase (F(1)F(0) ATP synthase or Complex V) produces ATP from ADP in the presence of a proton gradient across the membrane which is generated by electron transport complexes of the respiratory chain. F-type ATPases consist of two structural domains, F(1) - containing the extramembraneous catalytic core and F(0) - containing the membrane proton channel, linked together by a central stalk and a peripheral stalk. During catalysis, ATP synthesis in the catalytic domain of F(1) is coupled via a rotary mechanism of the central stalk subunits to proton translocation. Part of the complex F(0) domain. Minor subunit located with subunit a in the membrane. The sequence is that of ATP synthase protein 8 (MTATP8) from Branchiostoma floridae (Florida lancelet).